Consider the following 188-residue polypeptide: Photosystem I assembly protein Ycf4 (188 aa).

The next 2 membrane-spanning stretches (helical) occupy residues 22–42 (LGWASVLLLGTSGFLLTGLSS) and 68–88 (LVMCFYGIAGLFLSTYLWCAI).

This sequence belongs to the Ycf4 family.

Its subcellular location is the plastid. It localises to the chloroplast thylakoid membrane. Its function is as follows. Seems to be required for the assembly of the photosystem I complex. The chain is Photosystem I assembly protein Ycf4 from Zygnema circumcarinatum (Green alga).